The chain runs to 827 residues: Glycerol-3-phosphate acyltransferase (827 aa).

The HXXXXD motif signature appears at 325 to 330; the sequence is CHRSHM.

Belongs to the GPAT/DAPAT family.

The protein resides in the cell inner membrane. The enzyme catalyses sn-glycerol 3-phosphate + an acyl-CoA = a 1-acyl-sn-glycero-3-phosphate + CoA. It participates in phospholipid metabolism; CDP-diacylglycerol biosynthesis; CDP-diacylglycerol from sn-glycerol 3-phosphate: step 1/3. This Shigella sonnei (strain Ss046) protein is Glycerol-3-phosphate acyltransferase.